A 333-amino-acid polypeptide reads, in one-letter code: Biotin synthase (333 aa).

Residues 47 to 276 enclose the Radical SAM core domain; that stretch reads YYGKKVKLNM…TKEIRISGGR (230 aa). The [4Fe-4S] cluster site is built by Cys-65, Cys-69, and Cys-72. Residues Cys-109, Cys-141, Cys-201, and Arg-271 each coordinate [2Fe-2S] cluster.

This sequence belongs to the radical SAM superfamily. Biotin synthase family. As to quaternary structure, homodimer. The cofactor is [4Fe-4S] cluster. Requires [2Fe-2S] cluster as cofactor.

The catalysed reaction is (4R,5S)-dethiobiotin + (sulfur carrier)-SH + 2 reduced [2Fe-2S]-[ferredoxin] + 2 S-adenosyl-L-methionine = (sulfur carrier)-H + biotin + 2 5'-deoxyadenosine + 2 L-methionine + 2 oxidized [2Fe-2S]-[ferredoxin]. The protein operates within cofactor biosynthesis; biotin biosynthesis; biotin from 7,8-diaminononanoate: step 2/2. Functionally, catalyzes the conversion of dethiobiotin (DTB) to biotin by the insertion of a sulfur atom into dethiobiotin via a radical-based mechanism. The protein is Biotin synthase of Bacillus licheniformis (strain ATCC 14580 / DSM 13 / JCM 2505 / CCUG 7422 / NBRC 12200 / NCIMB 9375 / NCTC 10341 / NRRL NRS-1264 / Gibson 46).